The following is a 725-amino-acid chain: IML2-like protein YKR018C (725 aa).

Thr196 carries the phosphothreonine modification. Ser246, Ser377, and Ser380 each carry phosphoserine.

It belongs to the IML2 family.

The protein resides in the cytoplasm. Its subcellular location is the nucleus. The polypeptide is IML2-like protein YKR018C (Saccharomyces cerevisiae (strain ATCC 204508 / S288c) (Baker's yeast)).